Reading from the N-terminus, the 583-residue chain is Ribosomal lysine N-methyltransferase 1 (583 aa).

The 253-residue stretch at E22–G274 folds into the SET domain. Y273 contributes to the S-adenosyl-L-methionine binding site. Coiled coils occupy residues K378–S407 and K433–H459.

It belongs to the class V-like SAM-binding methyltransferase superfamily. RKM1 family.

The protein localises to the cytoplasm. It is found in the nucleus. S-adenosyl-L-methionine-dependent protein-lysine N-methyltransferase that monomethylates ribosomal protein S18 (RPS18A and RPS18B) at 'Lys-48' and dimethylates ribosomal protein L23 (RPL23A and RPL23B) at 'Lys-106' and 'Lys-110'. This chain is Ribosomal lysine N-methyltransferase 1, found in Saccharomyces cerevisiae (strain ATCC 204508 / S288c) (Baker's yeast).